Here is a 1052-residue protein sequence, read N- to C-terminus: Membrane-bound transcription factor site-1 protease (1052 aa).

An N-terminal signal peptide occupies residues 1–17 (MKLINIWLLLLVVLLCG). A propeptide spanning residues 18–186 (KKHLGDRLGK…TGRHSSRRLL (169 aa)) is cleaved from the precursor. The N-linked (GlcNAc...) asparagine glycan is linked to Asn148. Ser168 carries the post-translational modification Phosphoserine. The Lumenal segment spans residues 187–999 (RAIPRQVAQT…MPGRYNQEVG (813 aa)). Positions 190–472 (PRQVAQTLQA…HGKLDLLRAY (283 aa)) constitute a Peptidase S8 domain. Asp218 functions as the Charge relay system in the catalytic mechanism. An N-linked (GlcNAc...) asparagine glycan is attached at Asn236. The Charge relay system role is filled by His249. Asn305 carries N-linked (GlcNAc...) asparagine glycosylation. Ser414 (charge relay system) is an active-site residue. N-linked (GlcNAc...) asparagine glycans are attached at residues Asn515 and Asn728. A compositionally biased stretch (polar residues) spans 877–887 (PSLSHSGNRQR). Residues 877–900 (PSLSHSGNRQRPPSGAGLAPPERM) form a disordered region. Residue Asn939 is glycosylated (N-linked (GlcNAc...) asparagine). A helical transmembrane segment spans residues 1000–1022 (QTIPVFAFLGAMVALAFFVVQIS). Over 1023–1052 (KAKSRPKRRRPRAKRPQLTQQTHPPRTPSV) the chain is Cytoplasmic. Over residues 1025-1037 (KSRPKRRRPRAKR) the composition is skewed to basic residues. Positions 1025 to 1052 (KSRPKRRRPRAKRPQLTQQTHPPRTPSV) are disordered.

Belongs to the peptidase S8 family. Ca(2+) is required as a cofactor. The 148 kDa zymogen is processed progressively into two membrane-bound 120 and 106 kDa forms in the endoplasmic reticulum, and late into a secreted 98 kDa form. The propeptide is autocatalytically removed through an intramolecular cleavage after Leu-186. Further cleavage generates 14, 10, and 8 kDa intermediates.

It is found in the endoplasmic reticulum membrane. Its subcellular location is the golgi apparatus membrane. It carries out the reaction Processes precursors containing basic and hydrophobic/aliphatic residues at P4 and P2, respectively, with a relatively relaxed acceptance of amino acids at P1 and P3.. Inhibited by divalent copper and zinc ions, but not by nickel or cobalt. Inhibited by its prosegment, but not smaller fragments. Inhibited by 4-(2-aminoethyl)benzenesulfonyl fluoride (AEBSF), a serine protease inhibitor. Its function is as follows. Serine protease that cleaves after hydrophobic or small residues, provided that Arg or Lys is in position P4: known substrates include SREBF1/SREBP1, SREBF2/SREBP2, BDNF, GNPTAB, ATF6, ATF6B and FAM20C. Cleaves substrates after Arg-Ser-Val-Leu (SREBP2), Arg-His-Leu-Leu (ATF6), Arg-Gly-Leu-Thr (BDNF) and its own propeptide after Arg-Arg-Leu-Leu. Catalyzes the first step in the proteolytic activation of the sterol regulatory element-binding proteins (SREBPs) SREBF1/SREBP1 and SREBF2/SREBP2. Also mediates the first step in the proteolytic activation of the cyclic AMP-dependent transcription factor ATF-6 (ATF6 and ATF6B). Mediates the protein cleavage of GNPTAB into subunit alpha and beta, thereby participating in biogenesis of lysosomes. Cleaves the propeptide from FAM20C which is required for FAM20C secretion from the Golgi apparatus membrane and for enhancement of FAM20C kinase activity, promoting osteoblast differentiation and biomineralization. Involved in the regulation of M6P-dependent Golgi-to-lysosome trafficking of lysosomal enzymes. It is required for the activation of CREB3L2/BBF2H7, a transcriptional activator of MIA3/TANGO and other genes controlling mega vesicle formation. Therefore, it plays a key role in the regulation of mega vesicle-mediated collagen trafficking. In astrocytes and osteoblasts, upon DNA damage and ER stress, mediates the first step of the regulated intramembrane proteolytic activation of the transcription factor CREB3L1, leading to the inhibition of cell-cycle progression. This chain is Membrane-bound transcription factor site-1 protease, found in Cricetulus griseus (Chinese hamster).